A 1400-amino-acid chain; its full sequence is DNA-directed RNA polymerase subunit beta' (1400 aa).

4 residues coordinate Zn(2+): Cys-70, Cys-72, Cys-85, and Cys-88. Mg(2+)-binding residues include Asp-460, Asp-462, and Asp-464. The Zn(2+) site is built by Cys-814, Cys-888, Cys-895, and Cys-898.

Belongs to the RNA polymerase beta' chain family. In terms of assembly, the RNAP catalytic core consists of 2 alpha, 1 beta, 1 beta' and 1 omega subunit. When a sigma factor is associated with the core the holoenzyme is formed, which can initiate transcription. The cofactor is Mg(2+). It depends on Zn(2+) as a cofactor.

The enzyme catalyses RNA(n) + a ribonucleoside 5'-triphosphate = RNA(n+1) + diphosphate. DNA-dependent RNA polymerase catalyzes the transcription of DNA into RNA using the four ribonucleoside triphosphates as substrates. In Methylococcus capsulatus (strain ATCC 33009 / NCIMB 11132 / Bath), this protein is DNA-directed RNA polymerase subunit beta'.